A 691-amino-acid polypeptide reads, in one-letter code: Ribonucleoprotein PTB-binding 2 (691 aa).

Over residues 1–30 (MAAAAGDGGGEGGAGLGSAAGLGPGPGLRG) the composition is skewed to gly residues. The disordered stretch occupies residues 1 to 47 (MAAAAGDGGGEGGAGLGSAAGLGPGPGLRGQGPSAEAHEGAPDPMPA). Ala2 bears the N-acetylalanine mark. RRM domains follow at residues 69-140 (RKIL…LQPT), 142-220 (ALLC…WMDV), and 231-309 (KCLC…FCAP). 2 disordered regions span residues 492–522 (PNQHIAGQAGPGHSNTQEKQPATVGMAEGNF) and 543–574 (GHHKQQQSQPKGTEISSGAASKNQTSLLGEPP). Residues 548–569 (QQSQPKGTEISSGAASKNQTSL) are compositionally biased toward polar residues.

Interacts with PTBP1 and RAVER1.

It is found in the nucleus. The protein resides in the cytoplasm. May bind single-stranded nucleic acids. This is Ribonucleoprotein PTB-binding 2 (RAVER2) from Homo sapiens (Human).